The chain runs to 281 residues: 40S small subunit processome assembly factor 1 (281 aa).

The tract at residues 29 to 141 is disordered; the sequence is LGETEGETEQ…DEDEPAKNKT (113 aa). 2 positions are modified to phosphoserine: Ser-67 and Ser-75. Position 172 is an N6-acetyllysine (Lys-172). The tract at residues 221-254 is disordered; that stretch reads ETDIFKKKKKKGRGQEDRRSKKSAPSILSSGQVG. Ser-267 is subject to Phosphoserine.

As to quaternary structure, part of the small subunit (SSU) processome, composed of more than 70 proteins and the RNA chaperone small nucleolar RNA (snoRNA) U3.

The protein localises to the chromosome. It localises to the nucleus. It is found in the nucleolus. Functionally, part of the small subunit (SSU) processome, first precursor of the small eukaryotic ribosomal subunit. During the assembly of the SSU processome in the nucleolus, many ribosome biogenesis factors, an RNA chaperone and ribosomal proteins associate with the nascent pre-rRNA and work in concert to generate RNA folding, modifications, rearrangements and cleavage as well as targeted degradation of pre-ribosomal RNA by the RNA exosome. Prevents helicase DHX37 to be recruited before post-A1 state. This chain is 40S small subunit processome assembly factor 1, found in Mus musculus (Mouse).